Here is a 294-residue protein sequence, read N- to C-terminus: NAD kinase (294 aa).

The Proton acceptor role is filled by D73. NAD(+) is bound by residues 73–74 (DG), 147–148 (NE), H158, R175, D177, and 188–193 (TAYALS).

It belongs to the NAD kinase family. A divalent metal cation serves as cofactor.

The protein localises to the cytoplasm. The enzyme catalyses NAD(+) + ATP = ADP + NADP(+) + H(+). Involved in the regulation of the intracellular balance of NAD and NADP, and is a key enzyme in the biosynthesis of NADP. Catalyzes specifically the phosphorylation on 2'-hydroxyl of the adenosine moiety of NAD to yield NADP. The sequence is that of NAD kinase from Tolumonas auensis (strain DSM 9187 / NBRC 110442 / TA 4).